The primary structure comprises 549 residues: Undecaprenyl phosphate-alpha-4-amino-4-deoxy-L-arabinose arabinosyl transferase (549 aa).

12 consecutive transmembrane segments (helical) span residues 9–29 (LLLI…GLWI), 80–100 (LFGV…LAYL), 112–132 (SLAC…SGYA), 133–153 (NLDP…WHAL), 176–196 (FLTK…PYML), 204–224 (LLGY…PWAL), 256–276 (PWWF…GLLP), 288–308 (QAPV…FSLS), 312–332 (LPTY…HALV), 346–366 (NGLL…YLQL), 376–396 (FELF…LAQW), and 402–422 (AWAA…AAMP).

Belongs to the glycosyltransferase 83 family.

The protein resides in the cell inner membrane. It carries out the reaction 4-amino-4-deoxy-alpha-L-arabinopyranosyl di-trans,octa-cis-undecaprenyl phosphate + lipid IVA = lipid IIA + di-trans,octa-cis-undecaprenyl phosphate.. The protein operates within lipopolysaccharide metabolism; 4-amino-4-deoxy-beta-L-arabinose-lipid A biosynthesis. Catalyzes the transfer of the L-Ara4N moiety of the glycolipid undecaprenyl phosphate-alpha-L-Ara4N to lipid A. The modified arabinose is attached to lipid A and is required for resistance to polymyxin and cationic antimicrobial peptides. The protein is Undecaprenyl phosphate-alpha-4-amino-4-deoxy-L-arabinose arabinosyl transferase of Pseudomonas aeruginosa (strain LESB58).